The following is a 466-amino-acid chain: Cocosin 1 (466 aa).

A signal peptide spans 1–22 (MGSSSLLSFSLCLLLLCHLSQA). Cystine bridges form between Cys-45/Cys-78 and Cys-121/Cys-288. 2 consecutive Cupin type-1 domains span residues 50-242 (LNAL…ELAR) and 294-443 (QNIG…DEAR).

The protein belongs to the 11S seed storage protein (globulins) family. As to quaternary structure, hexamer; each subunit is composed of an acidic and a basic chain derived from a single precursor and linked by a disulfide bond. Endosperm of the seeds.

In terms of biological role, seed storage protein. The chain is Cocosin 1 from Cocos nucifera (Coconut palm).